Here is a 426-residue protein sequence, read N- to C-terminus: MSTLIEAIVAREVLDSRGNPTIEVDVRLESGDVGRAIVPSGASTGAHEALELRDGDKSRYNGKGVLKAVQAVNEDIAEALIGFDAADQIALDQELIALDGTPNKSKLGANAILGVSLAAAKAAAAAFGLPLYRYLGGVYAHVLPVPMMNIMNGGQHATNSTDFQEFMIMPVGAESFREGLRWGAEIYHMLKKVIHDRGFSTTVGDEGGFAPSLPTNDAPLQLIMEAIEKAGYRPGEQIVIALDPATTEIFEDGKYHLKREGRSLSSAEMVDYWVDLVNRYPIISLEDGLAEDDWEGWALLRAKLGDRVQLVGDDFLVTNVQRLQRAIEAKAANSILIKLNQIGSLTETLSAIQLAQRSGWTAVVSHRSGESEDVTIADLVVATNAGQIKTGAPARTDRIAKYNQLLRIEEELGSAARYAGRSAFKV.

Gly-41 serves as a coordination point for phosphoenolpyruvate. Ser-43 serves as a coordination point for Mg(2+). Residue Glu-165 coordinates phosphoenolpyruvate. The (2R)-2-phosphoglycerate site is built by Glu-165 and Glu-206. Glu-206 functions as the Proton donor in the catalytic mechanism. Mg(2+) contacts are provided by Asp-243, Glu-286, and Asp-313. The phosphoenolpyruvate site is built by Asp-313, Lys-338, Arg-367, Ser-368, and Lys-389. (2R)-2-phosphoglycerate contacts are provided by Lys-338, Arg-367, and Ser-368. Lys-338 (proton acceptor) is an active-site residue.

It belongs to the enolase family. Homodimer. Mg(2+) is required as a cofactor.

Its subcellular location is the cytoplasm. It localises to the secreted. It is found in the cell surface. It catalyses the reaction (2R)-2-phosphoglycerate = phosphoenolpyruvate + H2O. It functions in the pathway carbohydrate degradation; glycolysis; pyruvate from D-glyceraldehyde 3-phosphate: step 4/5. Functionally, catalyzes the reversible conversion of 2-phosphoglycerate (2-PG) into phosphoenolpyruvate (PEP). It is essential for the degradation of carbohydrates via glycolysis. In Chloroflexus aurantiacus (strain ATCC 29366 / DSM 635 / J-10-fl), this protein is Enolase.